The chain runs to 758 residues: 5-methyltetrahydropteroyltriglutamate--homocysteine methyltransferase (758 aa).

Residues arginine 17–lysine 20 and lysine 117 contribute to the 5-methyltetrahydropteroyltri-L-glutamate site. L-homocysteine contacts are provided by residues isoleucine 434–serine 436 and glutamate 487. L-methionine is bound by residues isoleucine 434–serine 436 and glutamate 487. 5-methyltetrahydropteroyltri-L-glutamate-binding positions include arginine 518–cysteine 519 and tryptophan 564. Aspartate 602 serves as a coordination point for L-homocysteine. Residue aspartate 602 participates in L-methionine binding. Glutamate 608 provides a ligand contact to 5-methyltetrahydropteroyltri-L-glutamate. Histidine 644, cysteine 646, and glutamate 668 together coordinate Zn(2+). Histidine 697 serves as the catalytic Proton donor. Cysteine 729 lines the Zn(2+) pocket.

Belongs to the vitamin-B12 independent methionine synthase family. It depends on Zn(2+) as a cofactor.

The enzyme catalyses 5-methyltetrahydropteroyltri-L-glutamate + L-homocysteine = tetrahydropteroyltri-L-glutamate + L-methionine. The protein operates within amino-acid biosynthesis; L-methionine biosynthesis via de novo pathway; L-methionine from L-homocysteine (MetE route): step 1/1. Its function is as follows. Catalyzes the transfer of a methyl group from 5-methyltetrahydrofolate to homocysteine resulting in methionine formation. This chain is 5-methyltetrahydropteroyltriglutamate--homocysteine methyltransferase, found in Sodalis glossinidius (strain morsitans).